The sequence spans 418 residues: Protein-lysine 6-oxidase (418 aa).

The first 20 residues, 1–20 (MRFAWTALLGSLQLCALVRC), serve as a signal peptide directing secretion. Positions 21–169 (APPAASHRQP…NRVEVDGMVG (149 aa)) are cleaved as a propeptide — removed by BMP1. Residues 63 to 84 (YQPQRRRDPGATAPGAANATAP) form a disordered region. Over residues 72-84 (GATAPGAANATAP) the composition is skewed to low complexity. Residues Asn-80, Asn-96, and Asn-143 are each glycosylated (N-linked (GlcNAc...) asparagine). Residues 130 to 175 (TSGAHDAGTSRADNQTAPGEVPTLSNLRPPNRVEVDGMVGDDPYNP) form a disordered region. Residues 140–157 (RADNQTAPGEVPTLSNLR) show a composition bias toward polar residues. Sulfotyrosine is present on Tyr-188. The segment at 214-418 (PDLVPDPYYI…YASGCTISPY (205 aa)) is lysyl-oxidase like. 5 disulfide bridges follow: Cys-239–Cys-245, Cys-292–Cys-341, Cys-325–Cys-331, Cys-352–Cys-362, and Cys-399–Cys-413. Cu cation is bound by residues His-293, His-295, and His-297. Residues 321 to 356 (KASFCLEDTSCDYGYHRRFACTAHTQGLSPGCYDTY) constitute a cross-link (lysine tyrosylquinone (Lys-Tyr)). 2',4',5'-topaquinone is present on Tyr-356.

It belongs to the lysyl oxidase family. In terms of assembly, interacts with MFAP4. Interacts (via propeptide) with EFEMP2; this interaction is strong and facilitates formation of ternary complexes with ELN during elastic fiber assembly; this interaction limits interaction of EFEMP2 with FBLN5. Requires Cu cation as cofactor. It depends on lysine tyrosylquinone residue as a cofactor. The lysine tyrosylquinone cross-link (LTQ) is generated by condensation of the epsilon-amino group of a lysine with a topaquinone produced by oxidation of tyrosine. In terms of processing, proteolytically cleaved by BMP1 which removes the propeptide. Also proteolytically cleaved by ADAMTS2 and ADAMTS14, but not by ADAMTS3, at an additional cleavage site downstream of the BMP1 cleavage site. The propeptide plays a role in directing the deposition of this enzyme to elastic fibers, via interaction with tropoelastin. Cleavage by BMP1 to remove the propeptide does not increase enzymatic activity but increases binding to collagen. Cleavage by ADAMTS2 produces a form with reduced collagen-binding activity. Post-translationally, sulfated at Tyr-188 and also at either Tyr-184 or Tyr-185 which enhances binding to collagen.

The protein localises to the secreted. It localises to the extracellular space. The enzyme catalyses L-lysyl-[protein] + O2 + H2O = (S)-2-amino-6-oxohexanoyl-[protein] + H2O2 + NH4(+). Functionally, responsible for the post-translational oxidative deamination of peptidyl lysine residues in precursors to fibrous collagen and elastin. Regulator of Ras expression. May play a role in tumor suppression. Plays a role in the aortic wall architecture. The chain is Protein-lysine 6-oxidase from Bos taurus (Bovine).